The following is a 581-amino-acid chain: Polypeptide N-acetylgalactosaminyltransferase 12 (581 aa).

Over 1–19 the chain is Cytoplasmic; that stretch reads MWGRTARRRCPRELRRGRE. The helical; Signal-anchor for type II membrane protein transmembrane segment at 20-37 threads the bilayer; it reads ALLVLLALLALAGLGSVL. Over 38–581 the chain is Lumenal; it reads RAQRGAGAGA…QKWFFKERML (544 aa). Residues 43 to 67 form a disordered region; sequence AGAGAAEPGPPRTPRPGRREPVMPR. Cystine bridges form between Cys125–Cys358, Cys349–Cys422, Cys458–Cys479, Cys506–Cys521, and Cys547–Cys566. Residues 135–244 form a catalytic subdomain A region; the sequence is LPRTSVIIAF…EGWLEPLLQR (110 aa). Substrate is bound by residues Asp176 and Arg205. The Mn(2+) site is built by Asp228 and His230. The tract at residues 304-366 is catalytic subdomain B; the sequence is VIRSPTMAGG…PCSHVGHVFP (63 aa). Residue Trp335 participates in substrate binding. His363 is a Mn(2+) binding site. Residue Tyr371 participates in substrate binding. In terms of domain architecture, Ricin B-type lectin spans 445-577; that stretch reads FFGMLQNKGL…NSDHQKWFFK (133 aa).

This sequence belongs to the glycosyltransferase 2 family. GalNAc-T subfamily. The cofactor is Mn(2+). Widely expressed at different levels of expression. Highly expressed in digestive organs such as small intestine, stomach, pancreas and colon. Expressed at intermediate level in testis, thyroid gland and spleen. Weakly expressed in whole brain, cerebral cortex, cerebellum, fetal brain, bone marrow, thymus, leukocytes, heart, skeletal muscle, liver, lung, esophagus, kidney, adrenal gland, mammary gland, uterus, placenta, ovary and prostate.

The protein resides in the golgi apparatus membrane. The catalysed reaction is L-seryl-[protein] + UDP-N-acetyl-alpha-D-galactosamine = a 3-O-[N-acetyl-alpha-D-galactosaminyl]-L-seryl-[protein] + UDP + H(+). It catalyses the reaction L-threonyl-[protein] + UDP-N-acetyl-alpha-D-galactosamine = a 3-O-[N-acetyl-alpha-D-galactosaminyl]-L-threonyl-[protein] + UDP + H(+). Its pathway is protein modification; protein glycosylation. Catalyzes the initial reaction in O-linked oligosaccharide biosynthesis, the transfer of an N-acetyl-D-galactosamine residue to a serine or threonine residue on the protein receptor. Has activity toward non-glycosylated peptides such as Muc5AC, Muc1a and EA2, and no detectable activity with Muc2 and Muc7. Displays enzymatic activity toward the Gal-NAc-Muc5AC glycopeptide, but no detectable activity to mono-GalNAc-glycosylated Muc1a, Muc2, Muc7 and EA2. May play an important role in the initial step of mucin-type oligosaccharide biosynthesis in digestive organs. The protein is Polypeptide N-acetylgalactosaminyltransferase 12 (GALNT12) of Homo sapiens (Human).